The following is a 306-amino-acid chain: tRNA pseudouridine synthase B (306 aa).

Aspartate 38 acts as the Nucleophile in catalysis.

Belongs to the pseudouridine synthase TruB family. Type 1 subfamily.

It catalyses the reaction uridine(55) in tRNA = pseudouridine(55) in tRNA. Its function is as follows. Responsible for synthesis of pseudouridine from uracil-55 in the psi GC loop of transfer RNAs. In Syntrophotalea carbinolica (strain DSM 2380 / NBRC 103641 / GraBd1) (Pelobacter carbinolicus), this protein is tRNA pseudouridine synthase B.